The following is a 477-amino-acid chain: Acetolactate synthase small subunit 2, chloroplastic (477 aa).

A chloroplast-targeting transit peptide spans 1–53 (MAATTTATSLFSSRLHFQNQNQGYGFPAKTPNSLQVNQIIDGRKMRNATVLSA). ACT domains are found at residues 78-150 (TISV…DLSK) and 309-383 (TLSL…NITH). Residues aspartate 85, isoleucine 89, isoleucine 90, asparagine 103, isoleucine 104, asparagine 316, valine 320, leucine 321, asparagine 334, and isoleucine 335 each coordinate L-valine.

Belongs to the acetolactate synthase small subunit family. As to quaternary structure, the acetolactate synthase complex contains 4 homodimers of the large catalytic subunits, and 1 homotetramer of the small regulatory subunits. As to expression, expressed in roots in the vascular tissuem in cells around the quiescent center, in floral organs at the tips of young siliques and in the joint region between the silique and the pedicel. Barely detectable in mature leaves or siliques.

The protein localises to the plastid. Its subcellular location is the chloroplast. It is found in the peroxisome. It functions in the pathway amino-acid biosynthesis; L-isoleucine biosynthesis; L-isoleucine from 2-oxobutanoate: step 1/4. It participates in amino-acid biosynthesis; L-valine biosynthesis; L-valine from pyruvate: step 1/4. Regulatory subunit of acetohydroxy-acid synthase. Involved in the feed-back inhibition by branched-chain amino acids but not in herbicide tolerance. May play a role in valine and isoleucine-mediated feedback inhibition in roots. In vitro, inhibited by valine, but not leucine or isoleucine. Required for reproductive development and sodium homeostasis. The chain is Acetolactate synthase small subunit 2, chloroplastic from Arabidopsis thaliana (Mouse-ear cress).